A 104-amino-acid polypeptide reads, in one-letter code: L-rhamnose mutarotase (104 aa).

A substrate-binding site is contributed by tyrosine 18. Histidine 22 acts as the Proton donor in catalysis. Residues tyrosine 41 and 76-77 contribute to the substrate site; that span reads WW. The interval 85–104 is disordered; it reads PSNPDNSPISDALDPVFYLD.

It belongs to the rhamnose mutarotase family. In terms of assembly, homodimer.

The protein localises to the cytoplasm. The catalysed reaction is alpha-L-rhamnose = beta-L-rhamnose. It participates in carbohydrate metabolism; L-rhamnose metabolism. In terms of biological role, involved in the anomeric conversion of L-rhamnose. This chain is L-rhamnose mutarotase, found in Pectobacterium atrosepticum (strain SCRI 1043 / ATCC BAA-672) (Erwinia carotovora subsp. atroseptica).